The following is a 174-amino-acid chain: NADH-quinone oxidoreductase subunit B 2 (174 aa).

Cys51, Cys52, Cys116, and Cys145 together coordinate [4Fe-4S] cluster.

It belongs to the complex I 20 kDa subunit family. As to quaternary structure, NDH-1 is composed of 14 different subunits. Subunits NuoB, C, D, E, F, and G constitute the peripheral sector of the complex. The cofactor is [4Fe-4S] cluster.

It is found in the cell inner membrane. It carries out the reaction a quinone + NADH + 5 H(+)(in) = a quinol + NAD(+) + 4 H(+)(out). NDH-1 shuttles electrons from NADH, via FMN and iron-sulfur (Fe-S) centers, to quinones in the respiratory chain. The immediate electron acceptor for the enzyme in this species is believed to be ubiquinone. Couples the redox reaction to proton translocation (for every two electrons transferred, four hydrogen ions are translocated across the cytoplasmic membrane), and thus conserves the redox energy in a proton gradient. The polypeptide is NADH-quinone oxidoreductase subunit B 2 (Thermodesulfovibrio yellowstonii (strain ATCC 51303 / DSM 11347 / YP87)).